A 218-amino-acid chain; its full sequence is MSENVVVIYSGGMDSFTVLHKALRAGKKVHALSFDYGQRHKKELDYAAAVCTSLGVPHKIVDISAINTLIGGSALTSDIDVPEGHYEEPSMKQTVVPNRNMILLSLAVGYAVSLDANEVYYGAHSGDHAIYPDCRPEFVHKMNDVCGIANYTPVTIMTPYIKDSKTAILTDGLSMGLDYGQTWTCYNGREKACGKCGACEERLEAFKDNGATDPLEYE.

9–19 (YSGGMDSFTVL) contributes to the ATP binding site. Cys185, Cys193, Cys196, and Cys199 together coordinate Zn(2+).

It belongs to the QueC family. Zn(2+) serves as cofactor.

It carries out the reaction 7-carboxy-7-deazaguanine + NH4(+) + ATP = 7-cyano-7-deazaguanine + ADP + phosphate + H2O + H(+). The protein operates within purine metabolism; 7-cyano-7-deazaguanine biosynthesis. Functionally, catalyzes the ATP-dependent conversion of 7-carboxy-7-deazaguanine (CDG) to 7-cyano-7-deazaguanine (preQ(0)). This Alteromonas mediterranea (strain DSM 17117 / CIP 110805 / LMG 28347 / Deep ecotype) protein is 7-cyano-7-deazaguanine synthase.